The following is a 173-amino-acid chain: Dirigent protein 8 (173 aa).

Residues 1 to 22 (MTNLILIFAAQILLFYAVASVG) form the signal peptide. N-linked (GlcNAc...) asparagine glycosylation is found at N69, N90, and N125.

This sequence belongs to the plant dirigent protein family. As to quaternary structure, homodimer.

Its subcellular location is the secreted. It localises to the extracellular space. The protein resides in the apoplast. Functionally, dirigent proteins impart stereoselectivity on the phenoxy radical-coupling reaction, yielding optically active lignans from two molecules of coniferyl alcohol in the biosynthesis of lignans, flavonolignans, and alkaloids and thus plays a central role in plant secondary metabolism. The polypeptide is Dirigent protein 8 (DIR8) (Arabidopsis thaliana (Mouse-ear cress)).